The sequence spans 489 residues: FAD-linked oxidoreductase tazG (489 aa).

An N-terminal signal peptide occupies residues 1 to 17 (MVAFSAILQTALGLSAA). Asparagine 38 is a glycosylation site (N-linked (GlcNAc...) asparagine). Positions 55–224 (APSYGAGAIK…TSATYRLPEV (170 aa)) constitute an FAD-binding PCMH-type domain. 2 N-linked (GlcNAc...) asparagine glycosylation sites follow: asparagine 242 and asparagine 306.

This sequence belongs to the oxygen-dependent FAD-linked oxidoreductase family. The cofactor is FAD.

It functions in the pathway secondary metabolite biosynthesis. FAD-linked oxidoreductase; part of the gene cluster that mediates the biosynthesis of azaterrilone A and other azaphilones, a class of fungal metabolites characterized by a highly oxygenated pyrano-quinone bicyclic core and exhibiting a broad range of bioactivities. The first step of the pathway begins with the non-reducing polyketide synthase tazA that assembles one acetyl-CoA starter unit, five malonyl-CoA units, and catalyzes a series of Claisen condensations, methylation, PT-mediated cyclization, and finally releases the first hexaketide precursor through the R-domain. The tazA product then undergoes reduction on its terminal ketone and the following pyran-ring formation by yet undetermined enzyme(s). Dehydration and enoyl reduction, possibly involving the trans-enoyl reductase tazE leads to the next intermediate. TazD is predicted as an acetyltransferase and might catalyze the acetylation steps leading to the synthesis of azaterrilone A. Azaterrilone A is not the final product of the taz pathway and both the highly reducing polyketide synthase tazB and the dual enzyme tazHJ catalyze late steps of the pathway, leading to the production of the 2 final stereoisomers that contain additional polyketide modification whose structures have still to be determined. In Aspergillus terreus (strain NIH 2624 / FGSC A1156), this protein is FAD-linked oxidoreductase tazG.